Consider the following 247-residue polypeptide: ATP synthase subunit a, chloroplastic (247 aa).

5 consecutive transmembrane segments (helical) span residues 38 to 58 (QVLI…TIAV), 95 to 115 (VPFI…GALL), 134 to 154 (INTT…AGLT), 199 to 219 (LVVV…VMLL), and 220 to 240 (GLFT…AYIG).

It belongs to the ATPase A chain family. As to quaternary structure, F-type ATPases have 2 components, CF(1) - the catalytic core - and CF(0) - the membrane proton channel. CF(1) has five subunits: alpha(3), beta(3), gamma(1), delta(1), epsilon(1). CF(0) has four main subunits: a, b, b' and c.

It is found in the plastid. The protein resides in the chloroplast thylakoid membrane. Functionally, key component of the proton channel; it plays a direct role in the translocation of protons across the membrane. This Nicotiana sylvestris (Wood tobacco) protein is ATP synthase subunit a, chloroplastic.